The chain runs to 397 residues: Phosphoglycerate kinase (397 aa).

Substrate is bound by residues 21 to 23 (DMN), Arg-36, 59 to 62 (HLGR), Arg-114, and Arg-147. Residues Lys-198, Glu-320, and 346–349 (GGDT) contribute to the ATP site.

It belongs to the phosphoglycerate kinase family. In terms of assembly, monomer.

It localises to the cytoplasm. The catalysed reaction is (2R)-3-phosphoglycerate + ATP = (2R)-3-phospho-glyceroyl phosphate + ADP. Its pathway is carbohydrate degradation; glycolysis; pyruvate from D-glyceraldehyde 3-phosphate: step 2/5. The sequence is that of Phosphoglycerate kinase from Neisseria gonorrhoeae (strain NCCP11945).